Here is a 218-residue protein sequence, read N- to C-terminus: Ras-related protein Rab11D (218 aa).

20–27 is a GTP binding site; it reads GDSGVGKS. Residues 42–50 carry the Effector region motif; sequence SKSTIGVEF. Residues 68 to 72 and 126 to 129 contribute to the GTP site; these read DTAGQ and NKSD. S-geranylgeranyl cysteine attachment occurs at residues Cys-215 and Cys-216.

This sequence belongs to the small GTPase superfamily. Rab family.

Its subcellular location is the cell membrane. The chain is Ras-related protein Rab11D (RAB11D) from Lotus japonicus (Lotus corniculatus var. japonicus).